Reading from the N-terminus, the 326-residue chain is tRNA-modifying protein YgfZ (326 aa).

Folate contacts are provided by Trp27 and Trp189.

Belongs to the tRNA-modifying YgfZ family.

The protein localises to the cytoplasm. Its function is as follows. Folate-binding protein involved in regulating the level of ATP-DnaA and in the modification of some tRNAs. It is probably a key factor in regulatory networks that act via tRNA modification, such as initiation of chromosomal replication. This Escherichia coli O157:H7 (strain EC4115 / EHEC) protein is tRNA-modifying protein YgfZ.